We begin with the raw amino-acid sequence, 107 residues long: U1-lycotoxin-Ls1c (107 aa).

Residues 1–20 (MMKVLVVVALLVTLISYSSS) form the signal peptide. The propeptide occupies 21–41 (EGIDDLEADELLSLMANEQTR). 4 disulfides stabilise this stretch: Cys44–Cys59, Cys51–Cys68, Cys58–Cys86, and Cys70–Cys84.

This sequence belongs to the neurotoxin 19 (CSTX) family. 04 (U1-Lctx) subfamily. In terms of tissue distribution, expressed by the venom gland.

It is found in the secreted. The chain is U1-lycotoxin-Ls1c from Lycosa singoriensis (Wolf spider).